The chain runs to 1604 residues: Ubiquitin carboxyl-terminal hydrolase 32 (1604 aa).

EF-hand domains are found at residues 91–126 (KDEE…VDGK), 228–263 (IRPS…CCRG), and 264–299 (PLAE…LLEV). Ca(2+)-binding residues include Asp-241, Asn-243, Asp-245, His-247, Glu-252, Asp-277, Asp-279, Asp-281, and Glu-288. The region spanning 369–585 (ATPEEEGQII…SNLALPRPVI (217 aa)) is the DUSP domain. The region spanning 734 to 1567 (TGLSNLGNTC…SAYILFYEQQ (834 aa)) is the USP domain. Cys-743 acts as the Nucleophile in catalysis. Tyr-1173 is modified (phosphotyrosine). Position 1350 is a phosphoserine (Ser-1350). The disordered stretch occupies residues 1353–1432 (EEDVLLSKSP…SKENLDTSKE (80 aa)). Polar residues predominate over residues 1360-1370 (KSPSSLSANVT). Over residues 1371–1399 (SSPKGSPSSSRKSGASCPSSKNSSPNSSP) the composition is skewed to low complexity. Phosphoserine occurs at positions 1372 and 1376. The span at 1415-1424 (GSKNKLSNSK) shows a compositional bias: polar residues. Ser-1454 is modified (phosphoserine). The disordered stretch occupies residues 1484 to 1504 (SNGQLGNHSEEDSTDDQREET). Over residues 1491-1504 (HSEEDSTDDQREET) the composition is skewed to basic and acidic residues. The Proton acceptor role is filled by His-1526. Ser-1588 bears the Phosphoserine mark. Cys-1601 carries the post-translational modification Cysteine methyl ester. A lipid anchor (S-farnesyl cysteine) is attached at Cys-1601. A propeptide spans 1602–1604 (VLQ) (removed in mature form).

It belongs to the peptidase C19 family.

The protein localises to the golgi apparatus membrane. The catalysed reaction is Thiol-dependent hydrolysis of ester, thioester, amide, peptide and isopeptide bonds formed by the C-terminal Gly of ubiquitin (a 76-residue protein attached to proteins as an intracellular targeting signal).. Functionally, deubiquitinase that can remove conjugated ubiquitin from target proteins, such as RAB7A and LAMTOR1. Acts as a positive regulator of the mTORC1 signaling by mediating deubiquitination of LAMTOR1, thereby promoting the association between LAMTOR1 and the lysosomal V-ATPase complex and subsequent activation of the mTORC1 complex. The protein is Ubiquitin carboxyl-terminal hydrolase 32 of Mus musculus (Mouse).